A 361-amino-acid chain; its full sequence is sn-glycerol-3-phosphate import ATP-binding protein UgpC (361 aa).

An ABC transporter domain is found at leucine 4 to isoleucine 235. ATP is bound at residue glycine 37–serine 44.

Belongs to the ABC transporter superfamily. sn-glycerol-3-phosphate importer (TC 3.A.1.1.3) family. In terms of assembly, the complex is composed of two ATP-binding proteins (UgpC), two transmembrane proteins (UgpA and UgpE) and a solute-binding protein (UgpB).

It is found in the cell inner membrane. It carries out the reaction sn-glycerol 3-phosphate(out) + ATP + H2O = sn-glycerol 3-phosphate(in) + ADP + phosphate + H(+). Functionally, part of the ABC transporter complex UgpBAEC involved in sn-glycerol-3-phosphate (G3P) import. Responsible for energy coupling to the transport system. This is sn-glycerol-3-phosphate import ATP-binding protein UgpC from Bordetella avium (strain 197N).